A 325-amino-acid polypeptide reads, in one-letter code: Inner membrane protein YrbG (325 aa).

The Periplasmic segment spans residues 1–5 (MLLAT). The chain crosses the membrane as a helical span at residues 6–26 (ALLIVGLLLVVYSADRLVFAA). The Cytoplasmic portion of the chain corresponds to 27–37 (SILCRTFGIPP). The chain crosses the membrane as a helical span at residues 38 to 58 (LIIGMTVVSIGTSLPEVIVSL). Residues 59 to 67 (AASLHEQRD) are Periplasmic-facing. A helical transmembrane segment spans residues 68 to 88 (LAVGTALGSNIINILLILGLA). The Cytoplasmic segment spans residues 89–104 (ALVRPFTVHSDVLRRE). Residues 105–125 (LPLMLLVSVVAGSVLYDGQLS) form a helical membrane-spanning segment. Arg-126 is a topological domain (periplasmic). Residues 127-147 (SDGIFLLFLAVLWLLFIVKLA) traverse the membrane as a helical segment. Residues 148–169 (RQAERQGTDSLTREQLAELPRD) are Cytoplasmic-facing. A helical transmembrane segment spans residues 170–190 (GGLPVAFLWLGIALIIMPVAT). The Periplasmic portion of the chain corresponds to 191–198 (RMVVDNAT). Residues 199 to 219 (VLANYFAISELTMGLTAIAIG) form a helical membrane-spanning segment. Topologically, residues 220–243 (TSLPELATAIAGVRKGENDIAVGN) are cytoplasmic. A helical membrane pass occupies residues 244–264 (IIGANIFNIVIVLGLPALITP). At 265 to 269 (GEIDP) the chain is on the periplasmic side. Residues 270–290 (LAYSRDYSVMLLVSIIFALLC) traverse the membrane as a helical segment. The Cytoplasmic segment spans residues 291-302 (WRRSPQPGRGVG). A helical transmembrane segment spans residues 303–323 (VLLTGGFIVWLAMLYWLSPIL). Over 324-325 (VE) the chain is Periplasmic.

Belongs to the Ca(2+):cation antiporter (CaCA) (TC 2.A.19) family.

The protein resides in the cell inner membrane. The polypeptide is Inner membrane protein YrbG (yrbG) (Escherichia coli (strain K12)).